Here is a 329-residue protein sequence, read N- to C-terminus: Glycerol-3-phosphate dehydrogenase [NAD(P)+] (329 aa).

Residues Ser-13, Trp-14, His-34, and Lys-105 each coordinate NADPH. Residues Lys-105, Gly-134, and Ser-136 each coordinate sn-glycerol 3-phosphate. Ala-138 is a binding site for NADPH. Sn-glycerol 3-phosphate contacts are provided by Lys-189, Asp-242, Ser-252, Arg-253, and Asn-254. The Proton acceptor role is filled by Lys-189. NADPH is bound at residue Arg-253. Val-277 and Glu-279 together coordinate NADPH.

It belongs to the NAD-dependent glycerol-3-phosphate dehydrogenase family.

The protein resides in the cytoplasm. It catalyses the reaction sn-glycerol 3-phosphate + NAD(+) = dihydroxyacetone phosphate + NADH + H(+). The catalysed reaction is sn-glycerol 3-phosphate + NADP(+) = dihydroxyacetone phosphate + NADPH + H(+). It functions in the pathway membrane lipid metabolism; glycerophospholipid metabolism. Catalyzes the reduction of the glycolytic intermediate dihydroxyacetone phosphate (DHAP) to sn-glycerol 3-phosphate (G3P), the key precursor for phospholipid synthesis. This chain is Glycerol-3-phosphate dehydrogenase [NAD(P)+], found in Legionella pneumophila (strain Lens).